A 347-amino-acid chain; its full sequence is GTP 3',8-cyclase (347 aa).

One can recognise a Radical SAM core domain in the interval 12–242 (FRPFGVLRLS…QRIDARWPLR (231 aa)). Residue R19 participates in GTP binding. The [4Fe-4S] cluster site is built by C26 and C30. Y32 contacts S-adenosyl-L-methionine. C33 contributes to the [4Fe-4S] cluster binding site. R65 is a GTP binding site. G69 lines the S-adenosyl-L-methionine pocket. GTP is bound at residue T104. S129 lines the S-adenosyl-L-methionine pocket. K178 lines the GTP pocket. S-adenosyl-L-methionine is bound at residue M212. 2 residues coordinate [4Fe-4S] cluster: C275 and C278. 280-282 (RLR) is a binding site for GTP. Position 292 (C292) interacts with [4Fe-4S] cluster.

This sequence belongs to the radical SAM superfamily. MoaA family. As to quaternary structure, monomer and homodimer. The cofactor is [4Fe-4S] cluster.

The catalysed reaction is GTP + AH2 + S-adenosyl-L-methionine = (8S)-3',8-cyclo-7,8-dihydroguanosine 5'-triphosphate + 5'-deoxyadenosine + L-methionine + A + H(+). The protein operates within cofactor biosynthesis; molybdopterin biosynthesis. Its function is as follows. Catalyzes the cyclization of GTP to (8S)-3',8-cyclo-7,8-dihydroguanosine 5'-triphosphate. The protein is GTP 3',8-cyclase of Synechococcus sp. (strain WH7803).